Here is a 587-residue protein sequence, read N- to C-terminus: UDP-N-acetylmuramoylalanine--D-glutamate ligase (587 aa).

The segment at 124 to 147 (DHLVPPESPLSDASDISDASDATD) is disordered. Residues 132–147 (PLSDASDISDASDATD) are compositionally biased toward low complexity. An ATP-binding site is contributed by 214–220 (GTNGKTT).

The protein belongs to the MurCDEF family.

The protein resides in the cytoplasm. It carries out the reaction UDP-N-acetyl-alpha-D-muramoyl-L-alanine + D-glutamate + ATP = UDP-N-acetyl-alpha-D-muramoyl-L-alanyl-D-glutamate + ADP + phosphate + H(+). It participates in cell wall biogenesis; peptidoglycan biosynthesis. Its function is as follows. Cell wall formation. Catalyzes the addition of glutamate to the nucleotide precursor UDP-N-acetylmuramoyl-L-alanine (UMA). This Polaromonas sp. (strain JS666 / ATCC BAA-500) protein is UDP-N-acetylmuramoylalanine--D-glutamate ligase.